The sequence spans 588 residues: Myc box-dependent-interacting protein 1 (588 aa).

A2 carries the post-translational modification N-acetylalanine. The interaction with BIN2 stretch occupies residues 2-122 (AEMGSKGVTA…DYHQKLVDQA (121 aa)). Coiled-coil stretches lie at residues 15-42 (ASNV…TKDE) and 193-274 (HLVA…EKQH). The 248-residue stretch at 29–276 (VLQKLGKADE…LVSLEKQHGS (248 aa)) folds into the BAR domain. Positions 279 to 355 (FTVKAQPSDS…PKHTPSKEMK (77 aa)) are disordered. S296, S298, and S304 each carry phosphoserine. The residue at position 308 (T308) is a Phosphothreonine. A phosphoserine mark is found at S324 and S332. Residues 379 to 422 (FEAPGPFSEQASLLDLDFEPLPPVASPVKAPTPSGQSIPWDLWE) form a clathrin-binding region. The interval 448 to 483 (PSQTAEPGPAQPAEASEVVGGTQEPGETAASEATSS) is disordered. The span at 474-483 (ETAASEATSS) shows a compositional bias: low complexity. The region spanning 515-588 (GFMFKVQAQH…FPENFTERVQ (74 aa)) is the SH3 domain.

As to quaternary structure, heterodimer with AMPH. Binds SH3GLB1. Interacts (via SH3 domain) with DNM1. Interacts with SYNJ1. Interacts (via SH3 domain) with DNM2. Interacts with CLTC. Interacts with AP2A2. Interacts with AP2B1. Interacts with MYC (via N-terminal transactivation domain); the interaction requires the integrity of the conserved MYC box regions 1 and 2. Interacts with BIN2. Interacts with SNX4. Interacts (via BAR domain) with BACE1. Binds (via BAR domain) F-actin. Phosphorylated by protein kinase C. In terms of tissue distribution, highly expressed in the brain and muscle. Isoform AMPH2-1 is expressed only in the brain where it is concentrated in axon initial segments and nodes of Ranvier. Isoform AMPH2-2 is widely expressed.

The protein localises to the nucleus. The protein resides in the cytoplasm. It is found in the endosome. Its subcellular location is the cell membrane. It localises to the sarcolemma. The protein localises to the T-tubule. Functionally, is a key player in the control of plasma membrane curvature, and membrane shaping and remodeling. Required in muscle cells for the formation of T-tubules, tubular invaginations of the plasma membrane that function in depolarization-contraction coupling. Required in muscle cells for the formation of T-tubules, tubular invaginations of the plasma membrane that function in depolarization-contraction coupling. Is a negative regulator of endocytosis. Is also involved in the regulation of intracellular vesicles sorting, modulation of BACE1 trafficking and the control of amyloid-beta production. In neuronal circuits, endocytosis regulation may influence the internalization of PHF-tau aggregates. May be involved in the regulation of MYC activity and the control cell proliferation. The chain is Myc box-dependent-interacting protein 1 (Bin1) from Rattus norvegicus (Rat).